The chain runs to 355 residues: Neutral protease 2 homolog MEP6 (355 aa).

The first 19 residues, 1-19, serve as a signal peptide directing secretion; the sequence is MRLSSSLIALVALAGQALA. Residues 20–179 constitute a propeptide that is removed on maturation; it reads LPFNELAERD…ASAIPELNKR (160 aa). 2 disulfide bridges follow: cysteine 187–cysteine 259 and cysteine 266–cysteine 283. Zn(2+) is bound at residue histidine 307. Glutamate 308 is a catalytic residue. Positions 311 and 322 each coordinate Zn(2+).

Belongs to the peptidase M35 family. The cofactor is Zn(2+).

Its subcellular location is the secreted. It catalyses the reaction Preferential cleavage of bonds with hydrophobic residues in P1'. Also 3-Asn-|-Gln-4 and 8-Gly-|-Ser-9 bonds in insulin B chain.. In terms of biological role, secreted metalloproteinase that allows assimilation of proteinaceous substrates. Shows high activities on basic nuclear substrates such as histone and protamine. May be involved in virulence. This chain is Neutral protease 2 homolog MEP6 (MEP6), found in Coccidioides posadasii (strain C735) (Valley fever fungus).